Here is a 276-residue protein sequence, read N- to C-terminus: Small ribosomal subunit protein uS3 (276 aa).

In terms of domain architecture, KH type-2 spans 39-110 (IRRETMKFLK…KINIKIKEIK (72 aa)).

This sequence belongs to the universal ribosomal protein uS3 family. As to quaternary structure, part of the 30S ribosomal subunit. Forms a tight complex with proteins S10 and S14.

Functionally, binds the lower part of the 30S subunit head. Binds mRNA in the 70S ribosome, positioning it for translation. This chain is Small ribosomal subunit protein uS3, found in Borrelia turicatae (strain 91E135).